Here is a 722-residue protein sequence, read N- to C-terminus: Inactive serine protease PAMR1 (722 aa).

The first 21 residues, 1-21, serve as a signal peptide directing secretion; that stretch reads MALLVWSSLVVASLHLLGTAA. A glycan (N-linked (GlcNAc...) asparagine) is linked at Asn98. 8 disulfides stabilise this stretch: Cys130-Cys152, Cys179-Cys201, Cys241-Cys252, Cys246-Cys262, Cys264-Cys273, Cys282-Cys331, Cys317-Cys344, and Cys416-Cys444. The CUB domain maps to 130-238; it reads CGEVIQAARG…DGFYVTFEEV (109 aa). The 38-residue stretch at 237-274 folds into the EGF-like domain; it reads EVTGCSSTPCFHDGTCIADKTGSYRCACLAGYTGRHCE. 2 Sushi domains span residues 280–346 and 393–446; these read KSCK…VCIK and KPAL…SCIP. N-linked (GlcNAc...) asparagine glycosylation is present at Asn318. The Peptidase S1 domain maps to 447 to 722; sequence ICGKLENFNI…FKEWLEKNMK (276 aa). Residue Asn455 is glycosylated (N-linked (GlcNAc...) asparagine). An intrachain disulfide couples Cys491 to Cys507. Asn616 carries an N-linked (GlcNAc...) asparagine glycan. 2 disulfides stabilise this stretch: Cys632/Cys651 and Cys663/Cys699.

The protein belongs to the peptidase S1 family.

The protein resides in the secreted. May play a role in regeneration of skeletal muscle. In Xenopus tropicalis (Western clawed frog), this protein is Inactive serine protease PAMR1 (pamr1).